A 188-amino-acid polypeptide reads, in one-letter code: Pyridoxal 5'-phosphate synthase subunit PdxT (188 aa).

46-48 (GES) contributes to the L-glutamine binding site. The active-site Nucleophile is C78. L-glutamine-binding positions include R105 and 134 to 135 (IR). Active-site charge relay system residues include H170 and E172.

The protein belongs to the glutaminase PdxT/SNO family. In terms of assembly, in the presence of PdxS, forms a dodecamer of heterodimers. Only shows activity in the heterodimer.

It catalyses the reaction aldehydo-D-ribose 5-phosphate + D-glyceraldehyde 3-phosphate + L-glutamine = pyridoxal 5'-phosphate + L-glutamate + phosphate + 3 H2O + H(+). The enzyme catalyses L-glutamine + H2O = L-glutamate + NH4(+). It participates in cofactor biosynthesis; pyridoxal 5'-phosphate biosynthesis. Catalyzes the hydrolysis of glutamine to glutamate and ammonia as part of the biosynthesis of pyridoxal 5'-phosphate. The resulting ammonia molecule is channeled to the active site of PdxS. In Thermotoga neapolitana (strain ATCC 49049 / DSM 4359 / NBRC 107923 / NS-E), this protein is Pyridoxal 5'-phosphate synthase subunit PdxT.